The sequence spans 152 residues: Mitochondrial fission 1 protein (152 aa).

M1 is modified (N-acetylmethionine). Residues 1-122 lie on the Cytoplasmic side of the membrane; sequence MEAVLNELVS…LIDKAMKKDG (122 aa). S10 is subject to Phosphoserine. Residues 71-104 form a TPR repeat; that stretch reads RDYVFYLAVGNYRLKEYEKALKYVRGLLQTEPQN. Residues 123–143 form a helical membrane-spanning segment; that stretch reads LVGMAIVGGMALGVAGLAGLI. The Mitochondrial intermembrane segment spans residues 144–152; sequence GLAVSKSKS.

The protein belongs to the FIS1 family. Interacts with DNM1L/DLP1 through the TPR region; may form part of a larger protein complex at the endoplasmic reticulum-mitochondrial interface during mitochondrial fission. Interacts with MARCHF5. Interacts with MIEF1. Interacts with PEX11A, PEX11B and PEX11G. Post-translationally, ubiquitinated by MARCHF5.

It is found in the mitochondrion outer membrane. The protein resides in the peroxisome membrane. Functionally, involved in the fragmentation of the mitochondrial network and its perinuclear clustering. Plays a minor role in the recruitment and association of the fission mediator dynamin-related protein 1 (DNM1L) to the mitochondrial surface and mitochondrial fission. May not be essential for the assembly of functional fission complexes and the subsequent membrane scission event. Also mediates peroxisomal fission. May act when the products of fission are directed toward mitochondrial homeostasis, mitophagy, or apoptosis. Can induce cytochrome c release from the mitochondrion to the cytosol, ultimately leading to apoptosis. This Rattus norvegicus (Rat) protein is Mitochondrial fission 1 protein.